The following is a 689-amino-acid chain: Glycine--tRNA ligase beta subunit (689 aa).

The protein belongs to the class-II aminoacyl-tRNA synthetase family. Tetramer of two alpha and two beta subunits.

It is found in the cytoplasm. The catalysed reaction is tRNA(Gly) + glycine + ATP = glycyl-tRNA(Gly) + AMP + diphosphate. The sequence is that of Glycine--tRNA ligase beta subunit from Salmonella paratyphi A (strain ATCC 9150 / SARB42).